We begin with the raw amino-acid sequence, 333 residues long: Biotin synthase (333 aa).

The region spanning 54–287 (ANHGAIHACS…TKIIKFAAGR (234 aa)) is the Radical SAM core domain. The [4Fe-4S] cluster site is built by cysteine 72, cysteine 76, and cysteine 79. 3 residues coordinate [2Fe-2S] cluster: cysteine 151, cysteine 212, and lysine 282.

It belongs to the radical SAM superfamily. Biotin synthase family. In terms of assembly, homodimer. [4Fe-4S] cluster serves as cofactor. Requires [2Fe-2S] cluster as cofactor.

The enzyme catalyses (4R,5S)-dethiobiotin + (sulfur carrier)-SH + 2 reduced [2Fe-2S]-[ferredoxin] + 2 S-adenosyl-L-methionine = (sulfur carrier)-H + biotin + 2 5'-deoxyadenosine + 2 L-methionine + 2 oxidized [2Fe-2S]-[ferredoxin]. It functions in the pathway cofactor biosynthesis; biotin biosynthesis; biotin from 7,8-diaminononanoate: step 2/2. Catalyzes the conversion of dethiobiotin (DTB) to biotin by the insertion of a sulfur atom into dethiobiotin via a radical-based mechanism. The sequence is that of Biotin synthase from Chlorobaculum tepidum (strain ATCC 49652 / DSM 12025 / NBRC 103806 / TLS) (Chlorobium tepidum).